The sequence spans 265 residues: Undecaprenyl-diphosphatase (265 aa).

8 consecutive transmembrane segments (helical) span residues 7-27, 45-65, 86-106, 108-128, 145-165, 186-206, 214-234, and 245-265; these read IIVS…PISS, TKIL…YFFH, LHII…YKKI, LLFN…FLLI, ISLL…YPGF, IEFS…YDFI, ILDL…SILC, and TSLI…YFIN.

The protein belongs to the UppP family.

It localises to the cell membrane. It carries out the reaction di-trans,octa-cis-undecaprenyl diphosphate + H2O = di-trans,octa-cis-undecaprenyl phosphate + phosphate + H(+). Functionally, catalyzes the dephosphorylation of undecaprenyl diphosphate (UPP). Confers resistance to bacitracin. In Buchnera aphidicola subsp. Acyrthosiphon pisum (strain Tuc7), this protein is Undecaprenyl-diphosphatase.